We begin with the raw amino-acid sequence, 277 residues long: Undecaprenyl-diphosphatase 2 (277 aa).

6 consecutive transmembrane segments (helical) span residues 43–63 (RAMA…VWEF), 87–107 (LLIA…TIHE), 109–129 (LFNP…MLWA), 183–203 (AATE…AVYS), 214–234 (SDLP…MIAV), and 254–274 (IAFG…WTAA).

The protein belongs to the UppP family.

Its subcellular location is the cell inner membrane. It catalyses the reaction di-trans,octa-cis-undecaprenyl diphosphate + H2O = di-trans,octa-cis-undecaprenyl phosphate + phosphate + H(+). Catalyzes the dephosphorylation of undecaprenyl diphosphate (UPP). Confers resistance to bacitracin. In Pseudomonas fluorescens (strain Pf0-1), this protein is Undecaprenyl-diphosphatase 2.